A 1035-amino-acid polypeptide reads, in one-letter code: Integrin alpha-9 (1035 aa).

An N-terminal signal peptide occupies residues 1 to 29 (MGGPAAPRGAGRLRALLLALVVAGIPAGA). The Extracellular segment spans residues 30–981 (YNLDPQRPVH…LEPRGYVVGW (952 aa)). 7 FG-GAP repeats span residues 35-96 (QRPV…PDRR), 111-174 (SCGK…AKGR), 182-232 (EYKK…NTYL), 233-289 (KLND…SGTL), 290-349 (IKIF…GALE), 351-408 (QLAL…GIVP), and 411-474 (SMKL…LPGS). Disulfide bonds link C87/C97, C142/C162, and C179/C194. N-linked (GlcNAc...) asparagine glycosylation is present at N225. 12 residues coordinate Ca(2+): D312, N314, D316, D320, D373, D375, D377, D381, D435, D437, N439, and D443. The N-linked (GlcNAc...) asparagine glycan is linked to N476. C482 and C491 are disulfide-bonded. N-linked (GlcNAc...) asparagine glycosylation occurs at N493. C497 and C555 are disulfide-bonded. N612 carries an N-linked (GlcNAc...) asparagine glycan. A disulfide bridge links C620 with C625. N654, N658, N672, and N676 each carry an N-linked (GlcNAc...) asparagine glycan. C696 and C706 are disulfide-bonded. Residues N807 and N854 are each glycosylated (N-linked (GlcNAc...) asparagine). 2 disulfides stabilise this stretch: C855–C891 and C898–C903. A glycan (N-linked (GlcNAc...) asparagine) is linked at N904. The helical transmembrane segment at 982 to 1002 (IIAISLLVGILIFLLLAVLLW) threads the bilayer. The Cytoplasmic segment spans residues 1003–1035 (KMGFFRRRYKEIIEAEKNRKENEDSWDWVQKNQ). Residues 1005–1009 (GFFRR) carry the GFFKR motif motif.

Belongs to the integrin alpha chain family. In terms of assembly, heterodimer of an alpha and a beta subunit. Alpha-9 (ITGA9) associates with beta-1 (ITGB1). Integrin ITGA9:ITGB1 interacts with FBLN5 (via N-terminus). Integrin ITGA9:ITGB1 interacts with SPP1/OPN (via N-terminus). Integrin ITGA9:ITGB1 interacts with TNC/TNFN3 (via the 3rd Fibronectin type-III domain). Integrin ITGA9:ITGB1 interacts with SVEP1/polydom (via Sushi domain 21); thereby inhibits Ca(2+) intracellular signaling and as a result represses vasocontraction. Expressed in vascular smooth muscle cells (at protein level). Expressed in the airway epithelium (at protein level).

The protein resides in the membrane. In terms of biological role, integrin alpha-9/beta-1 (ITGA9:ITGB1) is a receptor for VCAM1, cytotactin and osteopontin. It recognizes the sequence A-E-I-D-G-I-E-L in cytotactin. ITGA9:ITGB1 may play a crucial role in SVEP1/polydom-mediated myoblast cell adhesion. Integrin ITGA9:ITGB1 represses PRKCA-mediated L-type voltage-gated channel Ca(2+) influx and ROCK-mediated calcium sensitivity in vascular smooth muscle cells via its interaction with SVEP1, thereby inhibiting vasocontraction. The protein is Integrin alpha-9 (ITGA9) of Homo sapiens (Human).